A 229-amino-acid chain; its full sequence is Clathrin light chain B (229 aa).

Over residues 1–17 (MADDFGFFSSSESGAPE) the composition is skewed to low complexity. The interval 1–82 (MADDFGFFSS…NGDVFQEANG (82 aa)) is disordered. A phosphoserine mark is found at S11 and S13. Over residues 58 to 73 (GPTSGAGSEDMGTTVN) the composition is skewed to polar residues. The involved in binding clathrin heavy chain stretch occupies residues 93–155 (ADRLTQEPES…QVEKNKINNR (63 aa)). The residue at position 187 (T187) is a Phosphothreonine. A disulfide bridge connects residues C199 and C209. K204 carries the N6-acetyllysine modification. The residue at position 217 (S217) is a Phosphoserine.

Belongs to the clathrin light chain family. In terms of assembly, clathrin coats are formed from molecules containing 3 heavy chains and 3 light chains. Interacts (via N-terminus) with HIP1. Interacts with HIP1R.

The protein localises to the cytoplasmic vesicle membrane. It is found in the membrane. It localises to the coated pit. Its function is as follows. Clathrin is the major protein of the polyhedral coat of coated pits and vesicles. This chain is Clathrin light chain B (CLTB), found in Homo sapiens (Human).